Reading from the N-terminus, the 302-residue chain is Acetaldehyde dehydrogenase 1 (302 aa).

12 to 15 is a binding site for NAD(+); the sequence is SGNI. The Acyl-thioester intermediate role is filled by Cys-127. Residues 158 to 166 and Asn-277 each bind NAD(+); that span reads SAGPGTRAN.

This sequence belongs to the acetaldehyde dehydrogenase family.

The enzyme catalyses acetaldehyde + NAD(+) + CoA = acetyl-CoA + NADH + H(+). This chain is Acetaldehyde dehydrogenase 1, found in Mycobacteroides abscessus (strain ATCC 19977 / DSM 44196 / CCUG 20993 / CIP 104536 / JCM 13569 / NCTC 13031 / TMC 1543 / L948) (Mycobacterium abscessus).